A 61-amino-acid chain; its full sequence is Large ribosomal subunit protein bL28 (61 aa).

This sequence belongs to the bacterial ribosomal protein bL28 family.

This Lactobacillus johnsonii (strain CNCM I-12250 / La1 / NCC 533) protein is Large ribosomal subunit protein bL28.